A 134-amino-acid polypeptide reads, in one-letter code: L-ectoine synthase (134 aa).

It belongs to the ectoine synthase family.

The catalysed reaction is (2S)-4-acetamido-2-aminobutanoate = L-ectoine + H2O. It participates in amine and polyamine biosynthesis; ectoine biosynthesis; L-ectoine from L-aspartate 4-semialdehyde: step 3/3. Functionally, catalyzes the circularization of gamma-N-acetyl-alpha,gamma-diaminobutyric acid (ADABA) to ectoine (1,4,5,6-tetrahydro-2-methyl-4-pyrimidine carboxylic acid), which is an excellent osmoprotectant. This Thermobifida fusca (strain YX) protein is L-ectoine synthase.